Reading from the N-terminus, the 122-residue chain is Large ribosomal subunit protein bL20 (122 aa).

It belongs to the bacterial ribosomal protein bL20 family.

Binds directly to 23S ribosomal RNA and is necessary for the in vitro assembly process of the 50S ribosomal subunit. It is not involved in the protein synthesizing functions of that subunit. The chain is Large ribosomal subunit protein bL20 from Saccharopolyspora erythraea (strain ATCC 11635 / DSM 40517 / JCM 4748 / NBRC 13426 / NCIMB 8594 / NRRL 2338).